Here is a 315-residue protein sequence, read N- to C-terminus: Homoserine kinase (315 aa).

97-107 (PPARGLGSSAT) is a binding site for ATP.

It belongs to the GHMP kinase family. Homoserine kinase subfamily.

It localises to the cytoplasm. It carries out the reaction L-homoserine + ATP = O-phospho-L-homoserine + ADP + H(+). It functions in the pathway amino-acid biosynthesis; L-threonine biosynthesis; L-threonine from L-aspartate: step 4/5. Functionally, catalyzes the ATP-dependent phosphorylation of L-homoserine to L-homoserine phosphate. This is Homoserine kinase from Prochlorococcus marinus (strain MIT 9312).